The following is a 248-amino-acid chain: Deoxyribose-phosphate aldolase (248 aa).

The active-site Proton donor/acceptor is Asp-117. The Schiff-base intermediate with acetaldehyde role is filled by Lys-179. Catalysis depends on Lys-208, which acts as the Proton donor/acceptor.

The protein belongs to the DeoC/FbaB aldolase family. DeoC type 1 subfamily.

Its subcellular location is the cytoplasm. The enzyme catalyses 2-deoxy-D-ribose 5-phosphate = D-glyceraldehyde 3-phosphate + acetaldehyde. It participates in carbohydrate degradation; 2-deoxy-D-ribose 1-phosphate degradation; D-glyceraldehyde 3-phosphate and acetaldehyde from 2-deoxy-alpha-D-ribose 1-phosphate: step 2/2. Its function is as follows. Catalyzes a reversible aldol reaction between acetaldehyde and D-glyceraldehyde 3-phosphate to generate 2-deoxy-D-ribose 5-phosphate. The chain is Deoxyribose-phosphate aldolase from Thermotoga maritima (strain ATCC 43589 / DSM 3109 / JCM 10099 / NBRC 100826 / MSB8).